A 168-amino-acid polypeptide reads, in one-letter code: ATP synthase subunit b (168 aa).

Residues 9–29 (AIPFGTIAYTLFIFLLLLVML) form a helical membrane-spanning segment.

The protein belongs to the ATPase B chain family. As to quaternary structure, F-type ATPases have 2 components, F(1) - the catalytic core - and F(0) - the membrane proton channel. F(1) has five subunits: alpha(3), beta(3), gamma(1), delta(1), epsilon(1). F(0) has three main subunits: a(1), b(2) and c(10-14). The alpha and beta chains form an alternating ring which encloses part of the gamma chain. F(1) is attached to F(0) by a central stalk formed by the gamma and epsilon chains, while a peripheral stalk is formed by the delta and b chains.

The protein localises to the cell membrane. F(1)F(0) ATP synthase produces ATP from ADP in the presence of a proton or sodium gradient. F-type ATPases consist of two structural domains, F(1) containing the extramembraneous catalytic core and F(0) containing the membrane proton channel, linked together by a central stalk and a peripheral stalk. During catalysis, ATP synthesis in the catalytic domain of F(1) is coupled via a rotary mechanism of the central stalk subunits to proton translocation. Its function is as follows. Component of the F(0) channel, it forms part of the peripheral stalk, linking F(1) to F(0). This Bacillus thuringiensis (strain Al Hakam) protein is ATP synthase subunit b.